A 195-amino-acid chain; its full sequence is Capsid protein (195 aa).

A disordered region spans residues 148 to 195 (NAPILSTLPETTVVRRRGRSPRRRTPSPRRRRSQSPRRRRSASPASQC). Positions 161–188 (VRRRGRSPRRRTPSPRRRRSQSPRRRRS) are enriched in basic residues. Ser-167, Ser-174, and Ser-182 each carry phosphoserine; by host. Residues 167–172 (SPRRRT) form a 1; half-length repeat. The interval 167 to 188 (SPRRRTPSPRRRRSQSPRRRRS) is 3 X 7 AA repeats of S-P-R-R-R-[PR]-S. Residues 170–187 (RRTPSPRRRRSQSPRRRR) carry the Bipartite nuclear localization signal motif. 2 tandem repeats follow at residues 174–180 (SPRRRRS) and 182–188 (SPRRRRS). Positions 189–195 (ASPASQC) are RNA binding.

This sequence belongs to the orthohepadnavirus core antigen family. Homodimerizes, then multimerizes. Interacts with cytosol exposed regions of viral L glycoprotein present in the reticulum-to-Golgi compartment. Interacts with human FLNB. Phosphorylated form interacts with host importin alpha; this interaction depends on the exposure of the NLS, which itself depends upon genome maturation and/or phosphorylation of the capsid protein. Interacts with host NUP153. Post-translationally, phosphorylated by host SRPK1, SRPK2, and maybe protein kinase C or GAPDH. Phosphorylation is critical for pregenomic RNA packaging. Protein kinase C phosphorylation is stimulated by HBx protein and may play a role in transport of the viral genome to the nucleus at the late step during the viral replication cycle.

It localises to the virion. It is found in the host cytoplasm. In terms of biological role, self assembles to form an icosahedral capsid. Most capsids appear to be large particles with an icosahedral symmetry of T=4 and consist of 240 copies of capsid protein, though a fraction forms smaller T=3 particles consisting of 180 capsid proteins. Entering capsids are transported along microtubules to the nucleus. Phosphorylation of the capsid is thought to induce exposure of nuclear localization signal in the C-terminal portion of the capsid protein that allows binding to the nuclear pore complex via the importin (karyopherin-) alpha and beta. Capsids are imported in intact form through the nuclear pore into the nuclear basket, where it probably binds NUP153. Only capsids that contain the mature viral genome can release the viral DNA and capsid protein into the nucleoplasm. Immature capsids get stuck in the basket. Capsids encapsulate the pre-genomic RNA and the P protein. Pre-genomic RNA is reverse-transcribed into DNA while the capsid is still in the cytoplasm. The capsid can then either be directed to the nucleus, providing more genomes for transcription, or bud through the endoplasmic reticulum to provide new virions. In Hepatitis B virus genotype G (isolate IG29227/2000) (HBV-G), this protein is Capsid protein.